A 379-amino-acid chain; its full sequence is Cytochrome b (379 aa).

8 helical membrane-spanning segments follow: residues 33–53 (FGSL…FLAM), 77–98 (WLIR…FLHV), 113–133 (WNIG…GYVL), 178–198 (FFAF…VHLL), 226–246 (IKDV…VLFS), 288–308 (LGGV…PILH), 320–340 (LSQC…WIGG), and 347–367 (FITI…LALP). His83 and His97 together coordinate heme b. Heme b-binding residues include His182 and His196.

It belongs to the cytochrome b family. As to quaternary structure, the cytochrome bc1 complex contains 11 subunits: 3 respiratory subunits (MT-CYB, CYC1 and UQCRFS1), 2 core proteins (UQCRC1 and UQCRC2) and 6 low-molecular weight proteins (UQCRH/QCR6, UQCRB/QCR7, UQCRQ/QCR8, UQCR10/QCR9, UQCR11/QCR10 and a cleavage product of UQCRFS1). This cytochrome bc1 complex then forms a dimer. Requires heme b as cofactor.

It is found in the mitochondrion inner membrane. Component of the ubiquinol-cytochrome c reductase complex (complex III or cytochrome b-c1 complex) that is part of the mitochondrial respiratory chain. The b-c1 complex mediates electron transfer from ubiquinol to cytochrome c. Contributes to the generation of a proton gradient across the mitochondrial membrane that is then used for ATP synthesis. The sequence is that of Cytochrome b (MT-CYB) from Sciurus niger (Eastern fox squirrel).